A 261-amino-acid polypeptide reads, in one-letter code: Guanine nucleotide exchange factor BopE (261 aa).

Over residues 241-253 (RRAAQDASRDEKG) the composition is skewed to basic and acidic residues. A disordered region spans residues 241–261 (RRAAQDASRDEKGAANAADGA).

It belongs to the GEF (guanine exchange factor) SopE family. Monomer. Interacts with human CDC42.

The protein resides in the secreted. Its function is as follows. Activator for both CDC42 and RAC1 by directly interacting with these Rho GTPases and acting as a guanine nucleotide exchange factor (GEF). This activation results in actin cytoskeleton rearrangements and stimulates membrane ruffling, thus promoting bacterial entry into non-phagocytic cells. This chain is Guanine nucleotide exchange factor BopE (bopE), found in Burkholderia thailandensis (strain ATCC 700388 / DSM 13276 / CCUG 48851 / CIP 106301 / E264).